We begin with the raw amino-acid sequence, 276 residues long: Probable ABC transporter permease protein NosY (276 aa).

Transmembrane regions (helical) follow at residues 20–40, 55–75, 111–131, 146–166, 179–199, and 251–271; these read WLLAISLLFAVLAVGIAWLGA, IASLASLATFLMPLIALLLAY, ILALAVLIGFGCAALAIALLV, FMISSTLLGWVFLAFAYVLSG, LGVWFLFVLVFDLVLLALLVL, and VLWLCLLAWIGVSLLLAYAIF.

The complex may be composed of an ATP-binding protein (NosF), a transmembrane protein (NosY) and a solute-binding protein (NosD).

It is found in the cell inner membrane. Functionally, required for the assembly of the copper chromophores of nitrous oxide reductase. Could be part of the ABC transporter complex NosDFY. The protein is Probable ABC transporter permease protein NosY of Stutzerimonas stutzeri (Pseudomonas stutzeri).